The chain runs to 334 residues: Iron-uptake system permease protein FeuB (334 aa).

Helical transmembrane passes span 9 to 29 (IILI…ILYG), 63 to 83 (AAGA…MQGI), 91 to 111 (PSIM…MVLL), 119 to 139 (MMIY…GLAA), 150 to 170 (LAII…AMSI), 191 to 211 (PDFL…AISL), 243 to 263 (VIIL…VGLV), 281 to 301 (PCSC…SRFI), and 305 to 325 (FETP…LYLI).

The protein belongs to the binding-protein-dependent transport system permease family. FecCD subfamily. The complex is composed of one ATP-binding protein (YusV), two transmembrane proteins (FeuB and FeuC) and a solute-binding protein (FeuA).

The protein resides in the cell membrane. It is found in the membrane raft. Functionally, involved in the uptake of iron. Probably responsible for the translocation of the substrate across the membrane. Part of the ABC transporter complex FeuABC/YusV involved in import of the catecholate siderophores bacillibactin and enterobactin. This is Iron-uptake system permease protein FeuB (feuB) from Bacillus subtilis (strain 168).